The sequence spans 343 residues: Chlorophyll(ide) b reductase NOL, chloroplastic (343 aa).

A chloroplast-targeting transit peptide spans 1 to 54; sequence MAATAAYLPLRAQAQVGLAPLRPSGSAAAGARLPGRTARRRLAARGGPEAAGIR. 78 to 102 serves as a coordination point for NAD(+); it reads ITGSTKGIGYALAKEFLKAGDNVVI. The active-site Proton acceptor is the Y228.

This sequence belongs to the short-chain dehydrogenases/reductases (SDR) family. As to quaternary structure, interacts with NCY1 to form a complex that acts as a chlorophyll b reductase. In terms of tissue distribution, expressed in leaves and stems. Also detected in non-photosynthetic tissues such as roots.

It is found in the plastid. The protein localises to the chloroplast thylakoid membrane. The enzyme catalyses 7(1)-hydroxychlorophyllide a + NAD(+) = chlorophyllide b + NADH + H(+). It catalyses the reaction 7(1)-hydroxychlorophyllide a + NADP(+) = chlorophyllide b + NADPH + H(+). Functionally, required for chlorophyll b degradation. This Oryza sativa subsp. japonica (Rice) protein is Chlorophyll(ide) b reductase NOL, chloroplastic (NOL).